The chain runs to 511 residues: Chromosomal replication initiator protein DnaA (511 aa).

The domain I, interacts with DnaA modulators stretch occupies residues 1 to 90 (MSVELWQQCV…KRSSAPRAAP (90 aa)). Residues 91–174 (NAPLAAAASQ…QVEGALKHTS (84 aa)) form a domain II region. Residues 133-162 (VAAHDEPSRDSFDPMAGASSQQAPARAEQR) are disordered. Basic and acidic residues predominate over residues 135–144 (AHDEPSRDSF). The domain III, AAA+ region stretch occupies residues 175-391 (YLNRTFTFEN…GALKRVIAHS (217 aa)). ATP is bound by residues Gly219, Gly221, Lys222, and Thr223. A domain IV, binds dsDNA region spans residues 392–511 (HFMGRDITIE…YKNLLRTLTT (120 aa)).

It belongs to the DnaA family. In terms of assembly, oligomerizes as a right-handed, spiral filament on DNA at oriC.

It is found in the cytoplasm. Plays an essential role in the initiation and regulation of chromosomal replication. ATP-DnaA binds to the origin of replication (oriC) to initiate formation of the DNA replication initiation complex once per cell cycle. Binds the DnaA box (a 9 base pair repeat at the origin) and separates the double-stranded (ds)DNA. Forms a right-handed helical filament on oriC DNA; dsDNA binds to the exterior of the filament while single-stranded (ss)DNA is stabiized in the filament's interior. The ATP-DnaA-oriC complex binds and stabilizes one strand of the AT-rich DNA unwinding element (DUE), permitting loading of DNA polymerase. After initiation quickly degrades to an ADP-DnaA complex that is not apt for DNA replication. Binds acidic phospholipids. The chain is Chromosomal replication initiator protein DnaA from Pseudomonas savastanoi pv. phaseolicola (strain 1448A / Race 6) (Pseudomonas syringae pv. phaseolicola (strain 1448A / Race 6)).